Consider the following 361-residue polypeptide: Putative F-box protein At3g19560 (361 aa).

An F-box domain is found at 3–49 (MTMMSDISQDLLEEILSRVPITSLRAVKSTCKRWKDLLNDPSFSKKY).

This is Putative F-box protein At3g19560 from Arabidopsis thaliana (Mouse-ear cress).